The sequence spans 519 residues: Ribonuclease Y (519 aa).

The helical transmembrane segment at Leu3–Val23 threads the bilayer. Residues Thr209–Leu269 enclose the KH domain. An HD domain is found at Val335–Ala428.

This sequence belongs to the RNase Y family.

It is found in the cell membrane. Functionally, endoribonuclease that initiates mRNA decay. In Staphylococcus epidermidis (strain ATCC 35984 / DSM 28319 / BCRC 17069 / CCUG 31568 / BM 3577 / RP62A), this protein is Ribonuclease Y.